The chain runs to 328 residues: Complex I intermediate-associated protein 30, mitochondrial (328 aa).

A mitochondrion-targeting transit peptide spans 1-24 (MSSIHKLLTGIYIHKNFLRPRAAL). Polar residues predominate over residues 44–54 (VTSVDRASQQG). Residues 44–80 (VTSVDRASQQGKTEEGLQGHDHKEVALDAPSPDRTPE) are disordered. The span at 55–69 (KTEEGLQGHDHKEVA) shows a compositional bias: basic and acidic residues. A Phosphoserine modification is found at S319.

This sequence belongs to the CIA30 family. In terms of assembly, part of the mitochondrial complex I assembly/MCIA complex that comprises at least the core subunits TMEM126B, NDUFAF1, ECSIT and ACAD9 and complement subunits such as COA1 and TMEM186. Interacts with ECSIT. Interacts with ACAD9. At early stages of complex I assembly, it is found in intermediate subcomplexes that contain different subunits including NDUFB6, NDUFA6, NDUFA9, NDUFS3, NDUFS7, ND1, ND2 and ND3. Interacts with TMEM70 and TMEM242.

It localises to the mitochondrion. Its subcellular location is the mitochondrion matrix. As part of the MCIA complex, involved in the assembly of the mitochondrial complex I. The sequence is that of Complex I intermediate-associated protein 30, mitochondrial from Mus musculus (Mouse).